Here is a 194-residue protein sequence, read N- to C-terminus: dCTP deaminase (194 aa).

Residues R110–R115, D128, V136–E138, Y171, K178, and Q182 contribute to the dCTP site. The active-site Proton donor/acceptor is E138. Positions K175 to D194 are disordered. Positions K180 to D194 are enriched in polar residues.

The protein belongs to the dCTP deaminase family. As to quaternary structure, homotrimer.

It carries out the reaction dCTP + H2O + H(+) = dUTP + NH4(+). It functions in the pathway pyrimidine metabolism; dUMP biosynthesis; dUMP from dCTP (dUTP route): step 1/2. Its function is as follows. Catalyzes the deamination of dCTP to dUTP. This is dCTP deaminase from Actinobacillus pleuropneumoniae serotype 5b (strain L20).